Here is a 377-residue protein sequence, read N- to C-terminus: 3-dehydroquinate synthase (377 aa).

Residues 113–117 (GVIGD), 137–138 (TT), Lys150, and Lys159 each bind NAD(+). The Zn(2+) site is built by Glu192, His254, and His273.

It belongs to the sugar phosphate cyclases superfamily. Dehydroquinate synthase family. Co(2+) is required as a cofactor. Requires Zn(2+) as cofactor. The cofactor is NAD(+).

The protein localises to the cytoplasm. The enzyme catalyses 7-phospho-2-dehydro-3-deoxy-D-arabino-heptonate = 3-dehydroquinate + phosphate. The protein operates within metabolic intermediate biosynthesis; chorismate biosynthesis; chorismate from D-erythrose 4-phosphate and phosphoenolpyruvate: step 2/7. Its function is as follows. Catalyzes the conversion of 3-deoxy-D-arabino-heptulosonate 7-phosphate (DAHP) to dehydroquinate (DHQ). The chain is 3-dehydroquinate synthase from Bartonella tribocorum (strain CIP 105476 / IBS 506).